We begin with the raw amino-acid sequence, 202 residues long: Probable ATP-dependent Clp protease proteolytic subunit 3 (202 aa).

Residue Ser101 is the Nucleophile of the active site. Residue His126 is part of the active site.

The protein belongs to the peptidase S14 family. As to quaternary structure, fourteen ClpP subunits assemble into 2 heptameric rings which stack back to back to give a disk-like structure with a central cavity, resembling the structure of eukaryotic proteasomes.

It is found in the cytoplasm. The catalysed reaction is Hydrolysis of proteins to small peptides in the presence of ATP and magnesium. alpha-casein is the usual test substrate. In the absence of ATP, only oligopeptides shorter than five residues are hydrolyzed (such as succinyl-Leu-Tyr-|-NHMec, and Leu-Tyr-Leu-|-Tyr-Trp, in which cleavage of the -Tyr-|-Leu- and -Tyr-|-Trp bonds also occurs).. Cleaves peptides in various proteins in a process that requires ATP hydrolysis. Has a chymotrypsin-like activity. Plays a major role in the degradation of misfolded proteins. The sequence is that of Probable ATP-dependent Clp protease proteolytic subunit 3 from Synechocystis sp. (strain ATCC 27184 / PCC 6803 / Kazusa).